Reading from the N-terminus, the 323-residue chain is DNA primase small subunit PriS (323 aa).

Catalysis depends on residues Asp-97, Asp-99, and Asp-274.

The protein belongs to the eukaryotic-type primase small subunit family. In terms of assembly, heterodimer of a small subunit (PriS) and a large subunit (PriL). Mg(2+) is required as a cofactor. It depends on Mn(2+) as a cofactor.

In terms of biological role, catalytic subunit of DNA primase, an RNA polymerase that catalyzes the synthesis of short RNA molecules used as primers for DNA polymerase during DNA replication. The small subunit contains the primase catalytic core and has DNA synthesis activity on its own. Binding to the large subunit stabilizes and modulates the activity, increasing the rate of DNA synthesis while decreasing the length of the DNA fragments, and conferring RNA synthesis capability. The DNA polymerase activity may enable DNA primase to also catalyze primer extension after primer synthesis. May also play a role in DNA repair. This Methanothermobacter thermautotrophicus (strain ATCC 29096 / DSM 1053 / JCM 10044 / NBRC 100330 / Delta H) (Methanobacterium thermoautotrophicum) protein is DNA primase small subunit PriS.